Here is a 478-residue protein sequence, read N- to C-terminus: Putative UDP-glucose flavonoid 3-O-glucosyltransferase 3 (478 aa).

Belongs to the UDP-glycosyltransferase family.

The chain is Putative UDP-glucose flavonoid 3-O-glucosyltransferase 3 from Fragaria ananassa (Strawberry).